The sequence spans 47 residues: Small ribosomal subunit protein uS14 (47 aa).

Cys12, Cys15, Cys30, and Cys33 together coordinate Zn(2+).

It belongs to the universal ribosomal protein uS14 family. Zinc-binding uS14 subfamily. Part of the 30S ribosomal subunit. The cofactor is Zn(2+).

Functionally, binds 16S rRNA, required for the assembly of 30S particles. The sequence is that of Small ribosomal subunit protein uS14 from Methanosphaera stadtmanae (strain ATCC 43021 / DSM 3091 / JCM 11832 / MCB-3).